A 332-amino-acid polypeptide reads, in one-letter code: MNADHAPFRHYLDLADARLGSQVVAVSDEWFAPASRMLQAGEPVWKEGVFDDSGKWMDGWETRRKRFEGHDQAVIRLGVSGVLKGVDIDTRFFTGNHPPAASLDGCFCAEGDPDDGTSWSEVLPSVELQGDRHHYHAIDDERPWTHLRLNIYPDGGIARLRVYGVPYRDWRSQTPGTALDLAAAINGGRALACSDQHFGPMVNLLKPGRALNMGDGWETGRRRTPGHDWAIIALGHPGSIEAAVVDTLHFKGNYPESCSIQAAFVEDGNEARIEAQSLFWRELLPAQKLEMHHEHRFERQLNALGPVSHVRLNIFPDGGVSRLRLFGRPQLP.

The protein belongs to the allantoicase family.

It carries out the reaction allantoate + H2O = (S)-ureidoglycolate + urea. It participates in nitrogen metabolism; (S)-allantoin degradation; (S)-ureidoglycolate from allantoate (aminidohydrolase route): step 1/1. The chain is Probable allantoicase from Pseudomonas paraeruginosa (strain DSM 24068 / PA7) (Pseudomonas aeruginosa (strain PA7)).